Reading from the N-terminus, the 97-residue chain is YcgL domain-containing protein Psyr_1564 (97 aa).

The 85-residue stretch at 3 to 87 (RICSIYRSPK…AEDDYIEHLP (85 aa)) folds into the YcgL domain.

The sequence is that of YcgL domain-containing protein Psyr_1564 from Pseudomonas syringae pv. syringae (strain B728a).